The sequence spans 345 residues: NADPH dehydrogenase (345 aa).

23–26 (SPMC) contacts FMN. Tyr28 serves as a coordination point for substrate. Residues Ala60 and Gln102 each coordinate FMN. Residue 164–167 (HGAH) coordinates substrate. Residues Arg215 and 307 to 308 (GR) each bind FMN.

It belongs to the NADH:flavin oxidoreductase/NADH oxidase family. NamA subfamily. As to quaternary structure, homotetramer. The cofactor is FMN.

It catalyses the reaction A + NADPH + H(+) = AH2 + NADP(+). Functionally, catalyzes the reduction of the double bond of an array of alpha,beta-unsaturated aldehydes and ketones. It also reduces the nitro group of nitroester and nitroaromatic compounds. It could have a role in detoxification processes. The polypeptide is NADPH dehydrogenase (Bacillus anthracis (strain CDC 684 / NRRL 3495)).